A 384-amino-acid chain; its full sequence is Sphingosine 1-phosphate receptor 3 (384 aa).

The Extracellular portion of the chain corresponds to 1–34 (MMINPLIYLHYNYTGKLDHRPTVGTSPGTRDPKT). N-linked (GlcNAc...) asparagine glycosylation is present at Asn12. Residues 35 to 55 (IAFLVVCSFIILENLTVLLAI) traverse the membrane as a helical segment. The Cytoplasmic segment spans residues 56-64 (WKNHRFHNR). Residues 65-85 (MYFFIGNLALCDLLASVAYLV) traverse the membrane as a helical segment. Residues 86 to 105 (NLLLSGEKTLQLSPVLWFVR) are Extracellular-facing. The helical transmembrane segment at 106 to 126 (EGSMFVTLGASIFSLLAIAIE) threads the bilayer. At 127–144 (RHLTMIKMRPYDASKNYR) the chain is on the cytoplasmic side. The helical transmembrane segment at 145–165 (VFLLIGTCWLVAVLLGALPIL) threads the bilayer. The Extracellular segment spans residues 166-186 (GWNCLGNLPDCSTILPLYTKK). Residues 187–207 (YVAFCIIVFIVLLLAMSVLYA) traverse the membrane as a helical segment. Residues 208–235 (RIYILVKSSSQKVSKHRNSEHAMSLLRT) lie on the Cytoplasmic side of the membrane. Residues 236–256 (VIIVVGVFIACWMPIFVLLLL) traverse the membrane as a helical segment. At 257 to 271 (DVACERPCPILYKAD) the chain is on the extracellular side. The helical transmembrane segment at 272–292 (WFIAVAVLNSAMNPIIYTLAS) threads the bilayer. The Cytoplasmic segment spans residues 293–384 (REMRRAFLGL…REGEGGNGGR (92 aa)). Polar residues-rich tracts occupy residues 315 to 325 (NDSGNKQFQEP) and 336 to 347 (QTHPNQSQQSSR). A disordered region spans residues 315–384 (NDSGNKQFQE…REGEGGNGGR (70 aa)). The span at 349–359 (AELDREQETGH) shows a compositional bias: basic and acidic residues.

The protein belongs to the G-protein coupled receptor 1 family.

It localises to the cell membrane. Receptor for the lysosphingolipid sphingosine 1-phosphate (S1P). In Takifugu rubripes (Japanese pufferfish), this protein is Sphingosine 1-phosphate receptor 3 (s1pr3).